The sequence spans 100 residues: Defensin-B4 (100 aa).

Positions 1 to 22 are cleaved as a signal peptide; sequence MRASLLLFILLVYLAHAPQAQG. The propeptide occupies 23-26; it reads VFGP. 3 disulfide bridges follow: Cys29–Cys56, Cys36–Cys50, and Cys40–Cys57. Residues 60 to 100 form a disordered region; sequence STGTSSSQGSHEVPVINSEPALESKPEPQDTQEEEATMVSE. Acidic residues predominate over residues 89 to 100; sequence DTQEEEATMVSE.

The protein belongs to the beta-defensin family. Highly expressed in kidney, lowly expressed in spleen, and expressed at lower levels in lung.

It localises to the secreted. In terms of biological role, has antimicrobial activity. This Ornithorhynchus anatinus (Duckbill platypus) protein is Defensin-B4.